A 252-amino-acid polypeptide reads, in one-letter code: Mating-type switching protein swi10 (252 aa).

A DNA-binding region spans residues 76–98 (TGICSLFLSLKYHHLHPEYIYSR).

Belongs to the ERCC1/RAD10/SWI10 family. As to quaternary structure, heterodimer composed of rad16 and swi10.

The protein resides in the nucleus. Involved in termination of copy-synthesis during mating-type switching. Involved in nucleotide excision repair of DNA damaged with UV light, bulky adducts, or cross-linking agents. Along with RAD16 forms an endonuclease that specifically degrades single-stranded DNA. In Schizosaccharomyces pombe (strain 972 / ATCC 24843) (Fission yeast), this protein is Mating-type switching protein swi10 (swi10).